Reading from the N-terminus, the 1080-residue chain is Protein transport protein SEC24 C (1080 aa).

The span at 1–10 (MVAPVPPGAP) shows a compositional bias: pro residues. 3 disordered regions span residues 1–189 (MVAP…SGMI), 201–220 (GSGG…TTPQ), and 316–367 (TAMG…SDYV). The span at 12-43 (PNSQQNSGPPNFYPGSQGNSNALADNMQNLSL) shows a compositional bias: polar residues. The segment covering 45–70 (RPPPMMPGSGPRPPPPFGQSPQPFPQ) has biased composition (pro residues). Low complexity-rich tracts occupy residues 71 to 84 (QSPS…GPSP), 142 to 160 (PAAS…SVAA), and 178 to 189 (GSGMSMPPSGMI). A compositionally biased stretch (polar residues) spans 340-356 (GSSSSPTVFETRQSNQA). Cys-430, Cys-433, Cys-452, and Cys-455 together coordinate Zn(2+). Positions 430 to 455 (CSRCKGYINPFMKFIDQGRKFICNFC) are zinc finger-like.

The protein belongs to the SEC23/SEC24 family. SEC24 subfamily. As to quaternary structure, component of the coat protein complex II (COPII), composed of at least five proteins: the Sec23/24 complex, the Sec13/31 complex and Sar1. Mainly expressed at low levels in pollen, leaves, roots and stems.

The protein resides in the cytoplasmic vesicle. It localises to the COPII-coated vesicle membrane. The protein localises to the endoplasmic reticulum membrane. It is found in the golgi apparatus membrane. Its function is as follows. Component of the coat protein complex II (COPII), that covers ER-derived vesicles involved in transport from the endoplasmic reticulum to the Golgi apparatus. COPII is composed of at least five proteins: the SEC23/24 complex, the SEC13/31 complex, and the protein SAR1. Acts in the cytoplasm to promote the transport of secretory, plasma membrane, and vacuolar proteins from the endoplasmic reticulum to the Golgi complex. The polypeptide is Protein transport protein SEC24 C (Arabidopsis thaliana (Mouse-ear cress)).